Reading from the N-terminus, the 574-residue chain is Arginine--tRNA ligase (574 aa).

Residues proline 121–histidine 131 carry the 'HIGH' region motif.

This sequence belongs to the class-I aminoacyl-tRNA synthetase family. As to quaternary structure, monomer.

It is found in the cytoplasm. The catalysed reaction is tRNA(Arg) + L-arginine + ATP = L-arginyl-tRNA(Arg) + AMP + diphosphate. The chain is Arginine--tRNA ligase from Buchnera aphidicola subsp. Acyrthosiphon pisum (strain Tuc7).